The sequence spans 568 residues: Protein disconnected (568 aa).

The tract at residues 16–77 (GHGPHSHQHV…PRRWGSPPIN (62 aa)) is disordered. Over residues 19–29 (PHSHQHVHSHL) the composition is skewed to basic residues. The segment covering 30 to 45 (PSHPQPNAASPASSPG) has biased composition (low complexity). Over residues 46–62 (GSSGSGSGSAAGSGTGS) the composition is skewed to gly residues. 2 consecutive C2H2-type zinc fingers follow at residues 92 to 115 (VQCS…SAVH) and 120 to 145 (HKCT…ANPN). 4 disordered regions span residues 134–157 (RRSR…RRKI), 220–364 (LLST…SDAF), 391–419 (SSAS…DSDS), and 501–568 (QQYN…PISV). Over residues 235 to 246 (NEQDADPEDDND) the composition is skewed to acidic residues. Over residues 253-263 (QANSSSPAASS) the composition is skewed to polar residues. Positions 282–292 (SLSLASSSSIA) are enriched in low complexity. Positions 313 to 360 (SEQDREQEQEQEQEREREAEKEQEQDVESDKEHEPEQEHELEREKRSP) are enriched in basic and acidic residues. The span at 391 to 402 (SSASSSSASASA) shows a compositional bias: low complexity. The span at 520-550 (HLTLSHHHQEQHHHLGHHHMGHHHHHHHQHH) shows a compositional bias: basic residues. Positions 558 to 568 (SPAATNAPISV) are enriched in polar residues.

Expressed at low levels in the adult head and very low, but detectable, levels in the body.

It is found in the nucleus. Its function is as follows. Required for the establishment of stable connections between the larval optic nerves, the Bolwig's nerves, and their target cells in the brain during embryonic development. The polypeptide is Protein disconnected (disco) (Drosophila melanogaster (Fruit fly)).